The sequence spans 147 residues: VEWTDAERTAILTLWKKINIDEIGPCAMRRLLIVSPWTQRHFSTFGNISTNAAIMDNDLVAKHGSTVMGGLDRAIKNMDDIKGAYRELSKKHSDQLHVDPDNFRLLAECITLCVAGKFGPKEFTADVHEAWYKFLAAVTSALSRQYH.

The Globin domain occupies 2–147; it reads EWTDAERTAI…VTSALSRQYH (146 aa). Heme b contacts are provided by H63 and H92.

It belongs to the globin family. Heterotetramer of two alpha chains and two beta chains. Red blood cells.

Involved in oxygen transport from gills to the various peripheral tissues. The chain is Hemoglobin subunit beta-3 (hbb3) from Muraena helena (Mediterranean moray).